The chain runs to 291 residues: 4-diphosphocytidyl-2-C-methyl-D-erythritol kinase (291 aa).

Lysine 8 is a catalytic residue. 89-99 (PIGAGVGGGSS) is an ATP binding site. Aspartate 131 is a catalytic residue.

Belongs to the GHMP kinase family. IspE subfamily.

The catalysed reaction is 4-CDP-2-C-methyl-D-erythritol + ATP = 4-CDP-2-C-methyl-D-erythritol 2-phosphate + ADP + H(+). It participates in isoprenoid biosynthesis; isopentenyl diphosphate biosynthesis via DXP pathway; isopentenyl diphosphate from 1-deoxy-D-xylulose 5-phosphate: step 3/6. Catalyzes the phosphorylation of the position 2 hydroxy group of 4-diphosphocytidyl-2C-methyl-D-erythritol. This Chlamydia caviae (strain ATCC VR-813 / DSM 19441 / 03DC25 / GPIC) (Chlamydophila caviae) protein is 4-diphosphocytidyl-2-C-methyl-D-erythritol kinase.